A 217-amino-acid polypeptide reads, in one-letter code: Imidazole glycerol phosphate synthase subunit HisH (217 aa).

In terms of domain architecture, Glutamine amidotransferase type-1 spans 3–217; it reads TIAIVDYGMG…IYRNFVHWKP (215 aa). Catalysis depends on cysteine 82, which acts as the Nucleophile. Residues histidine 197 and glutamate 199 contribute to the active site.

As to quaternary structure, heterodimer of HisH and HisF.

It is found in the cytoplasm. It carries out the reaction 5-[(5-phospho-1-deoxy-D-ribulos-1-ylimino)methylamino]-1-(5-phospho-beta-D-ribosyl)imidazole-4-carboxamide + L-glutamine = D-erythro-1-(imidazol-4-yl)glycerol 3-phosphate + 5-amino-1-(5-phospho-beta-D-ribosyl)imidazole-4-carboxamide + L-glutamate + H(+). The catalysed reaction is L-glutamine + H2O = L-glutamate + NH4(+). It participates in amino-acid biosynthesis; L-histidine biosynthesis; L-histidine from 5-phospho-alpha-D-ribose 1-diphosphate: step 5/9. Functionally, IGPS catalyzes the conversion of PRFAR and glutamine to IGP, AICAR and glutamate. The HisH subunit catalyzes the hydrolysis of glutamine to glutamate and ammonia as part of the synthesis of IGP and AICAR. The resulting ammonia molecule is channeled to the active site of HisF. The sequence is that of Imidazole glycerol phosphate synthase subunit HisH from Ralstonia nicotianae (strain ATCC BAA-1114 / GMI1000) (Ralstonia solanacearum).